The primary structure comprises 125 residues: Large ribosomal subunit protein bL12 (125 aa).

It belongs to the bacterial ribosomal protein bL12 family. In terms of assembly, homodimer. Part of the ribosomal stalk of the 50S ribosomal subunit. Forms a multimeric L10(L12)X complex, where L10 forms an elongated spine to which 2 to 4 L12 dimers bind in a sequential fashion. Binds GTP-bound translation factors.

Its function is as follows. Forms part of the ribosomal stalk which helps the ribosome interact with GTP-bound translation factors. Is thus essential for accurate translation. This is Large ribosomal subunit protein bL12 from Hyphomonas neptunium (strain ATCC 15444).